The following is a 202-amino-acid chain: Uclacyanin-2 (202 aa).

Positions 1–29 (MAMNGLSKMAVAAATALLLVLTIVPGAVA) are cleaved as a signal peptide. Residues 30-126 (VTYTIEWTTG…GMKLAVNVVA (97 aa)) form the Phytocyanin domain. Cu cation is bound at residue histidine 65. An N-linked (GlcNAc...) asparagine glycan is attached at asparagine 86. Cu cation-binding residues include cysteine 106, histidine 111, and methionine 118. The interval 129–181 (AGPPATPTPPSSTPGTPTTPESPPSGGSPTPTTPTPGAGSTSPPPPPKASGAS) is disordered. A compositionally biased stretch (low complexity) spans 141–169 (TPGTPTTPESPPSGGSPTPTTPTPGAGST). Serine 178 carries GPI-anchor amidated serine lipidation. Positions 179 to 202 (GASKGVMSYVLVGVSMVLGYGLWM) are cleaved as a propeptide — removed in mature form.

The protein resides in the cell membrane. Its function is as follows. Probably acts as an electron carrier involved in oxygen activation and/or lignin formation. In Arabidopsis thaliana (Mouse-ear cress), this protein is Uclacyanin-2.